The sequence spans 520 residues: Protein-export membrane protein SecD (520 aa).

6 helical membrane passes run 10 to 30 (IILL…PTLA), 364 to 384 (DSLL…FLRY), 391 to 411 (LPMI…AAGI), 417 to 437 (LSVI…LVII), 461 to 481 (FWVI…LAIL), and 483 to 503 (LGDL…GVLI).

The protein belongs to the SecD/SecF family. SecD subfamily. Part of the protein translocation apparatus. Forms a complex with SecF.

The protein resides in the cell membrane. Its function is as follows. Involved in protein export. In Haloquadratum walsbyi (strain DSM 16790 / HBSQ001), this protein is Protein-export membrane protein SecD.